The sequence spans 136 residues: ATP synthase F(0) complex subunit C1, mitochondrial (136 aa).

A mitochondrion-targeting transit peptide spans 1–61; sequence MQTTGALLIS…REFQTSVVSR (61 aa). Residues 77–97 traverse the membrane as a helical segment; sequence VGVAGSGAGIGTVFGSLIIGY. K104 is modified (N6,N6,N6-trimethyllysine). A helical membrane pass occupies residues 112–132; sequence ILGFALSEAMGLFCLMVAFLI.

The protein belongs to the ATPase C chain family. Homooctamer; the c-ring consists of eight c subunits forming a circle, and each subunit adopts a hairpin shape. Component of the ATP synthase complex composed at least of ATP5F1A/subunit alpha, ATP5F1B/subunit beta, ATP5MC1/subunit c (homooctomer), MT-ATP6/subunit a, MT-ATP8/subunit 8, ATP5ME/subunit e, ATP5MF/subunit f, ATP5MG/subunit g, ATP5MK/subunit k, ATP5MJ/subunit j, ATP5F1C/subunit gamma, ATP5F1D/subunit delta, ATP5F1E/subunit epsilon, ATP5PF/subunit F6, ATP5PB/subunit b, ATP5PD/subunit d, ATP5PO/subunit OSCP. ATP synthase complex consists of a soluble F(1) head domain (subunits alpha(3) and beta(3)) - the catalytic core - and a membrane F(0) domain - the membrane proton channel (subunits c, a, 8, e, f, g, k and j). These two domains are linked by a central stalk (subunits gamma, delta, and epsilon) rotating inside the F1 region and a stationary peripheral stalk (subunits F6, b, d, and OSCP). Interacts with TMEM70 (homooligomer form); this interaction facilitates the oligomer formation of subunit c/ATP5MC1 (c-ring) and the c-ring membrane insertion and also protects ATP5MC1 against intramitochondrial proteolysis. In terms of processing, trimethylated by ATPSCKMT at Lys-104. Methylation is required for proper incorporation of the C subunit into the ATP synthase complex and mitochondrial respiration.

Its subcellular location is the mitochondrion membrane. It carries out the reaction H(+)(in) = H(+)(out). Its function is as follows. Subunit c, of the mitochondrial membrane ATP synthase complex (F(1)F(0) ATP synthase or Complex V) that produces ATP from ADP in the presence of a proton gradient across the membrane which is generated by electron transport complexes of the respiratory chain. ATP synthase complex consist of a soluble F(1) head domain - the catalytic core - and a membrane F(1) domain - the membrane proton channel. These two domains are linked by a central stalk rotating inside the F(1) region and a stationary peripheral stalk. During catalysis, ATP synthesis in the catalytic domain of F(1) is coupled via a rotary mechanism of the central stalk subunits to proton translocation. With the subunit a (MT-ATP6), forms the proton-conducting channel in the F(0) domain, that contains two crucial half-channels (inlet and outlet) that facilitate proton movement from the mitochondrial intermembrane space (IMS) into the matrix. Protons are taken up via the inlet half-channel and released through the outlet half-channel, following a Grotthuss mechanism. This is ATP synthase F(0) complex subunit C1, mitochondrial from Bos taurus (Bovine).